The sequence spans 272 residues: GPN-loop GTPase 3 (272 aa).

13–18 (GAGKST) provides a ligand contact to GTP. A Gly-Pro-Asn (GPN)-loop; involved in dimer interface motif is present at residues 70–72 (GPN). 173 to 176 (SKLD) is a GTP binding site.

Belongs to the GPN-loop GTPase family. As to quaternary structure, heterodimers with NPA3/GPN1 or GPN2. Binds to RNA polymerase II (RNAPII).

Its function is as follows. Small GTPase required for proper nuclear localization of RNA polymerase II and III (RNAPII and RNAPIII). May act at an RNAP assembly step prior to nuclear import. Promotes sister chromatid separation during anaphase. The protein is GPN-loop GTPase 3 of Saccharomyces cerevisiae (strain ATCC 204508 / S288c) (Baker's yeast).